A 266-amino-acid polypeptide reads, in one-letter code: Glucosamine-6-phosphate deaminase (266 aa).

Asp72 acts as the Proton acceptor; for enolization step in catalysis. The For ring-opening step role is filled by Asp141. The active-site Proton acceptor; for ring-opening step is the His143. Residue Glu148 is the For ring-opening step of the active site.

Belongs to the glucosamine/galactosamine-6-phosphate isomerase family. NagB subfamily. In terms of assembly, homohexamer.

The catalysed reaction is alpha-D-glucosamine 6-phosphate + H2O = beta-D-fructose 6-phosphate + NH4(+). It participates in amino-sugar metabolism; N-acetylneuraminate degradation; D-fructose 6-phosphate from N-acetylneuraminate: step 5/5. With respect to regulation, allosterically activated by N-acetylglucosamine 6-phosphate (GlcNAc6P). Functionally, catalyzes the reversible isomerization-deamination of glucosamine 6-phosphate (GlcN6P) to form fructose 6-phosphate (Fru6P) and ammonium ion. The sequence is that of Glucosamine-6-phosphate deaminase from Vibrio vulnificus (strain CMCP6).